The chain runs to 159 residues: Ribosomal RNA large subunit methyltransferase H (159 aa).

Residues L76, G108, and 127–132 (FSKMTL) contribute to the S-adenosyl-L-methionine site.

The protein belongs to the RNA methyltransferase RlmH family. In terms of assembly, homodimer.

It is found in the cytoplasm. It carries out the reaction pseudouridine(1915) in 23S rRNA + S-adenosyl-L-methionine = N(3)-methylpseudouridine(1915) in 23S rRNA + S-adenosyl-L-homocysteine + H(+). Specifically methylates the pseudouridine at position 1915 (m3Psi1915) in 23S rRNA. The chain is Ribosomal RNA large subunit methyltransferase H from Bacillus cereus (strain ATCC 10987 / NRS 248).